The sequence spans 287 residues: 4-diphosphocytidyl-2-C-methyl-D-erythritol kinase (287 aa).

Lys-11 is an active-site residue. 93–103 (PFGAGLGGGSS) contacts ATP. Asp-135 is a catalytic residue.

The protein belongs to the GHMP kinase family. IspE subfamily.

It catalyses the reaction 4-CDP-2-C-methyl-D-erythritol + ATP = 4-CDP-2-C-methyl-D-erythritol 2-phosphate + ADP + H(+). It functions in the pathway isoprenoid biosynthesis; isopentenyl diphosphate biosynthesis via DXP pathway; isopentenyl diphosphate from 1-deoxy-D-xylulose 5-phosphate: step 3/6. Functionally, catalyzes the phosphorylation of the position 2 hydroxy group of 4-diphosphocytidyl-2C-methyl-D-erythritol. The polypeptide is 4-diphosphocytidyl-2-C-methyl-D-erythritol kinase (Chlorobium luteolum (strain DSM 273 / BCRC 81028 / 2530) (Pelodictyon luteolum)).